Reading from the N-terminus, the 248-residue chain is Segregation and condensation protein A (248 aa).

This sequence belongs to the ScpA family. In terms of assembly, component of a cohesin-like complex composed of ScpA, ScpB and the Smc homodimer, in which ScpA and ScpB bind to the head domain of Smc. The presence of the three proteins is required for the association of the complex with DNA.

It is found in the cytoplasm. In terms of biological role, participates in chromosomal partition during cell division. May act via the formation of a condensin-like complex containing Smc and ScpB that pull DNA away from mid-cell into both cell halves. This is Segregation and condensation protein A from Clostridium perfringens (strain ATCC 13124 / DSM 756 / JCM 1290 / NCIMB 6125 / NCTC 8237 / Type A).